A 169-amino-acid polypeptide reads, in one-letter code: CKLF-like MARVEL transmembrane domain-containing protein 1 (169 aa).

An MARVEL domain is found at 17 to 135 (NLKQPETAAA…DAFVVTTKMR (119 aa)). Helical transmembrane passes span 22–42 (ETAA…ITQA), 46–66 (FITI…IYVL), 79–99 (LLDL…AILA), and 110–130 (YVGG…AFVV).

Belongs to the chemokine-like factor family. Highly expressed in testis.

It localises to the membrane. This Homo sapiens (Human) protein is CKLF-like MARVEL transmembrane domain-containing protein 1 (CMTM1).